The following is a 164-amino-acid chain: Putative pre-16S rRNA nuclease (164 aa).

The protein belongs to the YqgF nuclease family.

It is found in the cytoplasm. Functionally, could be a nuclease involved in processing of the 5'-end of pre-16S rRNA. The protein is Putative pre-16S rRNA nuclease of Caulobacter sp. (strain K31).